The chain runs to 360 residues: Cuticle collagen dpy-2 (360 aa).

3 triple-helical region regions span residues 123-152 (GERG…PGTT), 174-230 (GPRG…KGRT), and 238-303 (GPPG…PGTC). Disordered stretches follow at residues 127 to 158 (PSGD…ASCI) and 174 to 360 (GPRG…IRKW). A compositionally biased stretch (gly residues) spans 189 to 198 (GEYGIGGRPG). Low complexity predominate over residues 242 to 258 (DSGLPGPWGPPGSAGMP). Residues 273 to 288 (PGPPGAPGPGGMPGPN) are compositionally biased toward pro residues.

The protein belongs to the cuticular collagen family. In terms of assembly, collagen polypeptide chains are complexed within the cuticle by disulfide bonds and other types of covalent cross-links.

Its function is as follows. Nematode cuticles are composed largely of collagen-like proteins. The cuticle functions both as an exoskeleton and as a barrier to protect the worm from its environment. Mutations in dpy-2 affects the body shape. The polypeptide is Cuticle collagen dpy-2 (dpy-2) (Caenorhabditis elegans).